A 274-amino-acid polypeptide reads, in one-letter code: Large ribosomal subunit protein uL2 (274 aa).

The tract at residues 221–254 (RGTAMNPADHPHGGGEGRTFGKHPVSPWGLPTKG) is disordered.

This sequence belongs to the universal ribosomal protein uL2 family. As to quaternary structure, part of the 50S ribosomal subunit. Forms a bridge to the 30S subunit in the 70S ribosome.

One of the primary rRNA binding proteins. Required for association of the 30S and 50S subunits to form the 70S ribosome, for tRNA binding and peptide bond formation. It has been suggested to have peptidyltransferase activity; this is somewhat controversial. Makes several contacts with the 16S rRNA in the 70S ribosome. The sequence is that of Large ribosomal subunit protein uL2 from Sulfurihydrogenibium sp. (strain YO3AOP1).